A 313-amino-acid polypeptide reads, in one-letter code: Methionyl-tRNA formyltransferase (313 aa).

113 to 116 (SLLP) lines the (6S)-5,6,7,8-tetrahydrofolate pocket.

Belongs to the Fmt family.

The catalysed reaction is L-methionyl-tRNA(fMet) + (6R)-10-formyltetrahydrofolate = N-formyl-L-methionyl-tRNA(fMet) + (6S)-5,6,7,8-tetrahydrofolate + H(+). In terms of biological role, attaches a formyl group to the free amino group of methionyl-tRNA(fMet). The formyl group appears to play a dual role in the initiator identity of N-formylmethionyl-tRNA by promoting its recognition by IF2 and preventing the misappropriation of this tRNA by the elongation apparatus. The chain is Methionyl-tRNA formyltransferase from Acidithiobacillus ferrooxidans (strain ATCC 23270 / DSM 14882 / CIP 104768 / NCIMB 8455) (Ferrobacillus ferrooxidans (strain ATCC 23270)).